The sequence spans 501 residues: L-arabinose isomerase (501 aa).

Positions 306, 333, 350, and 450 each coordinate Mn(2+).

The protein belongs to the arabinose isomerase family. As to quaternary structure, homohexamer. Mn(2+) is required as a cofactor.

It carries out the reaction beta-L-arabinopyranose = L-ribulose. Its pathway is carbohydrate degradation; L-arabinose degradation via L-ribulose; D-xylulose 5-phosphate from L-arabinose (bacterial route): step 1/3. Functionally, catalyzes the conversion of L-arabinose to L-ribulose. The polypeptide is L-arabinose isomerase (Pectobacterium carotovorum subsp. carotovorum (strain PC1)).